The chain runs to 81 residues: Small ribosomal subunit protein eS21 (81 aa).

The protein belongs to the eukaryotic ribosomal protein eS21 family.

This chain is Small ribosomal subunit protein eS21 (RPS21), found in Zea mays (Maize).